Consider the following 1548-residue polypeptide: Dual oxidase 2 (1548 aa).

The first 25 residues, 1 to 25 (MLRARPEALMLLGALLTGSLGPSGN), serve as a signal peptide directing secretion. Topologically, residues 26–601 (QDALSLPWEV…EGSSPGFAIT (576 aa)) are extracellular. Residues 30–596 (SLPWEVQRYD…VLDFFEGSSP (567 aa)) form a peroxidase-like; mediates peroxidase activity region. N-linked (GlcNAc...) asparagine glycans are attached at residues N100, N348, N382, N455, and N537. A disulfide bridge connects residues C124 and C1162. A helical membrane pass occupies residues 602–622 (IIALCCLPLVSLLLSGVVAYF). The Cytoplasmic portion of the chain corresponds to 623–1041 (RGREHKKLQK…KRFVENYRRH (419 aa)). EF-hand domains follow at residues 819–854 (PQDM…FMKG), 855–890 (SPED…FIEI), and 899–934 (QLAE…HDSE). Residues D832, D834, N836, Y838, E843, D868, D870, N872, and E879 each contribute to the Ca(2+) site. Residues 960 to 1245 (ISCRVSFITR…GSYALIQLPT (286 aa)) form an interaction with TXNDC11 region. The interval 971–991 (PGERSHPQGLGPPAPEAPELG) is disordered. The helical transmembrane segment at 1042 to 1062 (IVCVAIFSAICVGVFADRAYY) threads the bilayer. Over 1063-1076 (YGFASPPSDIAQTT) the chain is Extracellular. A helical transmembrane segment spans residues 1077 to 1097 (LVGIILSRGTAASVSFMFSYI). The 183-residue stretch at 1084–1266 (RGTAASVSFM…YGGDKLVSLS (183 aa)) folds into the Ferric oxidoreductase domain. Over 1098–1128 (LLTMCRNLITFLRETFLNRYVPFDAAVDFHR) the chain is Cytoplasmic. The helical transmembrane segment at 1129–1151 (WIAMAAVVLAILHSAGHAVNVYI) threads the bilayer. Over 1152–1185 (FSVSPLSLLACIFPNVFVNDGSKLPQKFYWWFFQ) the chain is Extracellular. The helical transmembrane segment at 1186–1206 (TVPGMTGVLLLLVLAIMYVFA) threads the bilayer. The Cytoplasmic portion of the chain corresponds to 1207–1223 (SHHFRRRSFRGFWLTHH). Transmembrane regions (helical) follow at residues 1224–1244 (LYIL…IQLP) and 1245–1265 (TFHI…LVSL). The Cytoplasmic segment spans residues 1266–1548 (SRKKVEISVV…AHFMHHYENF (283 aa)). The region spanning 1267–1373 (RKKVEISVVK…DGPFGEGHQE (107 aa)) is the FAD-binding FR-type domain.

The protein in the N-terminal section; belongs to the peroxidase family. As to quaternary structure, heterodimer with DUOXA2; disulfide-linked. Interacts with TXNDC11, TPO and CYBA. N-glycosylated. In terms of tissue distribution, expressed in colon, small intestine, duodenum and tracheal surface epithelial cells (at protein level). Expressed in thyrocytes. Also detected in kidney, liver, lung, pancreas, prostate, salivary glands, rectum and testis.

Its subcellular location is the apical cell membrane. The protein resides in the cell junction. It catalyses the reaction NADH + O2 + H(+) = H2O2 + NAD(+). It carries out the reaction NADPH + O2 + H(+) = H2O2 + NADP(+). It functions in the pathway hormone biosynthesis; thyroid hormone biosynthesis. With respect to regulation, peroxidase activity is inhibited by aminobenzohydrazide. The NADPH oxidase activity is calcium-dependent. Generates hydrogen peroxide which is required for the activity of thyroid peroxidase/TPO and lactoperoxidase/LPO. Plays a role in thyroid hormones synthesis and lactoperoxidase-mediated antimicrobial defense at the surface of mucosa. May have its own peroxidase activity through its N-terminal peroxidase-like domain. This is Dual oxidase 2 (DUOX2) from Homo sapiens (Human).